We begin with the raw amino-acid sequence, 113 residues long: uncharacterized protein (113 aa).

The N-terminal stretch at 1 to 38 (MVKIERKATDSAYHEFTKILTSSAQLMAFLNQSDFVKA) is a signal peptide.

This is an uncharacterized protein from Haemophilus influenzae (strain ATCC 51907 / DSM 11121 / KW20 / Rd).